The primary structure comprises 70 residues: Putative ankyrin repeat protein RC0502 (70 aa).

An ANK repeat occupies 9-43; that stretch reads KGRIPIHYATYSKQHEITQILILLQPGSEIDTVDN.

The polypeptide is Putative ankyrin repeat protein RC0502 (Rickettsia conorii (strain ATCC VR-613 / Malish 7)).